The following is a 194-amino-acid chain: Small ribosomal subunit protein uS4c (194 aa).

In terms of domain architecture, S4 RNA-binding spans 82–143; the sequence is MRLDNILFRL…KERSKVLIQN (62 aa).

The protein belongs to the universal ribosomal protein uS4 family. Part of the 30S ribosomal subunit. Contacts protein S5. The interaction surface between S4 and S5 is involved in control of translational fidelity.

Its subcellular location is the plastid. It localises to the chloroplast. Its function is as follows. One of the primary rRNA binding proteins, it binds directly to 16S rRNA where it nucleates assembly of the body of the 30S subunit. In terms of biological role, with S5 and S12 plays an important role in translational accuracy. The protein is Small ribosomal subunit protein uS4c (rps4) of Trimezia steyermarkii (Steyermark's trimezia).